The chain runs to 231 residues: ATP phosphoribosyltransferase (231 aa).

The protein belongs to the ATP phosphoribosyltransferase family. Short subfamily. As to quaternary structure, heteromultimer composed of HisG and HisZ subunits.

It is found in the cytoplasm. The enzyme catalyses 1-(5-phospho-beta-D-ribosyl)-ATP + diphosphate = 5-phospho-alpha-D-ribose 1-diphosphate + ATP. Its pathway is amino-acid biosynthesis; L-histidine biosynthesis; L-histidine from 5-phospho-alpha-D-ribose 1-diphosphate: step 1/9. Catalyzes the condensation of ATP and 5-phosphoribose 1-diphosphate to form N'-(5'-phosphoribosyl)-ATP (PR-ATP). Has a crucial role in the pathway because the rate of histidine biosynthesis seems to be controlled primarily by regulation of HisG enzymatic activity. This Brucella melitensis biotype 2 (strain ATCC 23457) protein is ATP phosphoribosyltransferase.